The sequence spans 643 residues: Pseudouridylate synthase PUS7L (643 aa).

The Nucleophile role is filled by Asp284. In terms of domain architecture, TRUD spans 370–597 (GFVNYYGPQR…PGCYRPLLAK (228 aa)).

The protein belongs to the pseudouridine synthase TruD family.

It carries out the reaction a uridine in mRNA = a pseudouridine in mRNA. Its function is as follows. Pseudouridine synthase that catalyzes pseudouridylation of mRNAs. The protein is Pseudouridylate synthase PUS7L (pus7l) of Danio rerio (Zebrafish).